Consider the following 725-residue polypeptide: Beta-adducin (725 aa).

Positions 1 to 22 (MSEDTVPEAASPPPSQGQHYFD) are disordered. Phosphoserine occurs at positions 11 and 25. The residue at position 55 (Thr55) is a Phosphothreonine. 2 positions are modified to phosphoserine: Ser60 and Ser344. Residues 425 to 444 (KQQKEKTRWLNTPNTYLRVN) are interaction with calmodulin. A disordered region spans residues 525–725 (AEKSRSPSTE…KSKKKEKVES (201 aa)). A phosphoserine mark is found at Ser530 and Ser532. A Phosphothreonine modification is found at Thr533. Position 535 is a phosphoserine (Ser535). Thr561 bears the Phosphothreonine mark. A compositionally biased stretch (basic and acidic residues) spans 566–589 (EEYKKEVERKKLEQEQEGEKDIAT). Phosphoserine is present on residues Ser594, Ser598, Ser602, and Ser606. Positions 596–621 (VKSTPASPVQSPSKAGTKSPAVSPSK) are enriched in polar residues. Thr612 carries the post-translational modification Phosphothreonine. Residues Ser614, Ser618, and Ser620 each carry the phosphoserine modification. Over residues 622–631 (TSEDTKKTEV) the composition is skewed to basic and acidic residues. At Thr674 the chain carries Phosphothreonine. Residues Ser678, Ser685, Ser688, Ser692, Ser696, Ser698, Ser700, Ser702, and Ser712 each carry the phosphoserine modification. Positions 687 to 700 (TSGPLSPEGSPSKS) are enriched in low complexity. A compositionally biased stretch (basic residues) spans 701–725 (PSKKKKKFRTPSFLKKSKKKEKVES). The tract at residues 703–720 (KKKKKFRTPSFLKKSKKK) is interaction with calmodulin.

The protein belongs to the aldolase class II family. Adducin subfamily. Found in a complex with ADD2, DMTN and SLC2A1. Interacts with SLC2A1. Heterodimer of an alpha and a beta subunit.

The protein localises to the cytoplasm. It localises to the cytoskeleton. The protein resides in the cell membrane. In terms of biological role, membrane-cytoskeleton-associated protein that promotes the assembly of the spectrin-actin network. Binds to the erythrocyte membrane receptor SLC2A1/GLUT1 and may therefore provide a link between the spectrin cytoskeleton to the plasma membrane. Binds to calmodulin. Calmodulin binds preferentially to the beta subunit. The protein is Beta-adducin (Add2) of Mus musculus (Mouse).